The following is a 262-amino-acid chain: Hydroxyethylthiazole kinase (262 aa).

Substrate is bound at residue Met50. Residues Arg125 and Thr171 each contribute to the ATP site. Gly198 lines the substrate pocket.

This sequence belongs to the Thz kinase family. Mg(2+) serves as cofactor.

It catalyses the reaction 5-(2-hydroxyethyl)-4-methylthiazole + ATP = 4-methyl-5-(2-phosphooxyethyl)-thiazole + ADP + H(+). It participates in cofactor biosynthesis; thiamine diphosphate biosynthesis; 4-methyl-5-(2-phosphoethyl)-thiazole from 5-(2-hydroxyethyl)-4-methylthiazole: step 1/1. In terms of biological role, catalyzes the phosphorylation of the hydroxyl group of 4-methyl-5-beta-hydroxyethylthiazole (THZ). The chain is Hydroxyethylthiazole kinase from Escherichia coli O6:K15:H31 (strain 536 / UPEC).